The sequence spans 283 residues: tRNA-cytidine(32) 2-sulfurtransferase (283 aa).

A PP-loop motif motif is present at residues 37-42 (SGGKDS). [4Fe-4S] cluster is bound by residues Cys-112, Cys-115, and Cys-203.

The protein belongs to the TtcA family. In terms of assembly, homodimer. Mg(2+) is required as a cofactor. Requires [4Fe-4S] cluster as cofactor.

It localises to the cytoplasm. The enzyme catalyses cytidine(32) in tRNA + S-sulfanyl-L-cysteinyl-[cysteine desulfurase] + AH2 + ATP = 2-thiocytidine(32) in tRNA + L-cysteinyl-[cysteine desulfurase] + A + AMP + diphosphate + H(+). The protein operates within tRNA modification. Functionally, catalyzes the ATP-dependent 2-thiolation of cytidine in position 32 of tRNA, to form 2-thiocytidine (s(2)C32). The sulfur atoms are provided by the cysteine/cysteine desulfurase (IscS) system. This chain is tRNA-cytidine(32) 2-sulfurtransferase, found in Legionella pneumophila (strain Corby).